The chain runs to 257 residues: Reticulon-like protein B4 (257 aa).

A disordered region spans residues 19-42 (IHGHGDSSSLSDSDDDKKSTSSSS). The Reticulon domain maps to 68–257 (PADIFLWRNK…PRGALNKKKD (190 aa)). 3 consecutive transmembrane segments (helical) span residues 78–98 (KVSGGVLGAVTASWVLFELFE), 99–119 (YHLLAFLCHFAIFALAALFLW), and 173–193 (FILVIAGLWVLSIIGSCYNFL).

In terms of assembly, interacts with VirB2.

The protein resides in the endoplasmic reticulum membrane. Its function is as follows. Plays a role in the Agrobacterium-mediated plant transformation via its interaction with VirB2, the major component of the T-pilus. This chain is Reticulon-like protein B4 (RTNLB4), found in Arabidopsis thaliana (Mouse-ear cress).